Here is a 2023-residue protein sequence, read N- to C-terminus: Protein Daple (2023 aa).

The 121-residue stretch at 11–131 (NFMDSPLVVW…RMLLLILGCA (121 aa)) folds into the Calponin-homology (CH) domain. Coiled coils occupy residues 250–415 (RQHL…LLEE), 458–1064 (NESA…VEKN), and 1105–1419 (LKQI…QYKF). The segment at 1013–1035 (RHEEEAAHSEISQQTLGQTRSLP) is disordered. Residues 1022–1033 (EISQQTLGQTRS) show a composition bias toward polar residues. Disordered stretches follow at residues 1441 to 1824 (KPKK…GSAS) and 1837 to 2023 (LRSN…YGCV). Residues 1442–1460 (PKKESSRERPDAPRERIRS) show a composition bias toward basic and acidic residues. A compositionally biased stretch (pro residues) spans 1478-1491 (SAPPPPPPPLPPRQ). 2 stretches are compositionally biased toward polar residues: residues 1497 to 1518 (DSMN…SSPA) and 1564 to 1585 (TCST…SSSL). 2 stretches are compositionally biased toward low complexity: residues 1623-1643 (SAEF…KGSL) and 1667-1704 (RLSQ…SPGS). A GBA motif is present at residues 1700–1728 (SSPGSEMVTLEEFLQESNALSPPTVQTGS). Composition is skewed to polar residues over residues 1714–1727 (QESN…VQTG), 1752–1763 (TPTNYVTPTVKT), 1785–1799 (LTDT…QTLP), and 1809–1824 (ALQQ…GSAS). Residues 1890 to 1904 (VDPRRLSLAQPRDEF) are compositionally biased toward basic and acidic residues. The segment covering 1927-1945 (GSGSSRAGAARSGSAQPRG) has biased composition (low complexity). Over residues 1974-1988 (QEQREAESPLLKKAD) the composition is skewed to basic and acidic residues. The segment covering 1989–2014 (TTNLSYASKEQPTSKPASPDPNNDPQ) has biased composition (polar residues). The PDZ-binding signature appears at 2020-2023 (YGCV).

It belongs to the CCDC88 family.

The protein resides in the cytoplasm. Its subcellular location is the cell junction. Positive regulator of Wnt signaling, acting synergistically with dvl2. Functions upstream of ctnnb1/beta-catenin in the canonical Wnt pathway, and also activates jnk in the Wnt/planar cell polarity (PCP) pathway. Acts as a non-receptor guanine nucleotide exchange factor which binds to and activates guanine nucleotide-binding protein G(i) alpha (Gi-alpha) subunits. This promotes apical cell constriction and subsequent bending of the neural plate during neurulation via arhgef18. This Danio rerio (Zebrafish) protein is Protein Daple.